Reading from the N-terminus, the 20-residue chain is Cytochrome P450IIB (20 aa).

The protein belongs to the cytochrome P450 family. Requires heme as cofactor.

The protein resides in the endoplasmic reticulum membrane. It localises to the microsome membrane. It catalyses the reaction an organic molecule + reduced [NADPH--hemoprotein reductase] + O2 = an alcohol + oxidized [NADPH--hemoprotein reductase] + H2O + H(+). In terms of biological role, cytochromes P450 are a group of heme-thiolate monooxygenases. In liver microsomes, this enzyme is involved in an NADPH-dependent electron transport pathway. This isozyme is active upon P.nitroanisole, aniline, D-benzphetamine, delta(9)-tetrahydrocannabinol (THC) and strychnine. In Cavia porcellus (Guinea pig), this protein is Cytochrome P450IIB.